The primary structure comprises 413 residues: Metacaspase-1A (413 aa).

Residues 1–104 form a disordered region; that stretch reads MQNHHHQQSS…PTDPVAFGHG (104 aa). Over residues 36–47 the composition is skewed to pro residues; it reads SPQPGYGAPPPH. Over residues 49–58 the composition is skewed to low complexity; that stretch reads GYGQPPSGYG. Positions 75 to 85 are enriched in polar residues; it reads GMNQYQNTYSH. Residues His204 and Cys260 contribute to the active site.

It belongs to the peptidase C14B family.

In terms of biological role, involved in cell death (apoptosis). Required for the apoptotic-like loss of membrane phospholipid asymmetry at stationary phase and facilitates growth under conditions of endoplasmic reticulum stress. The sequence is that of Metacaspase-1A (casA) from Aspergillus fumigatus (strain CBS 144.89 / FGSC A1163 / CEA10) (Neosartorya fumigata).